The sequence spans 183 residues: Ribosome maturation factor RimM (183 aa).

In terms of domain architecture, PRC barrel spans 96-171; it reads PDEFYDHELE…VALIDPPEGL (76 aa).

The protein belongs to the RimM family. In terms of assembly, binds ribosomal protein uS19.

The protein localises to the cytoplasm. An accessory protein needed during the final step in the assembly of 30S ribosomal subunit, possibly for assembly of the head region. Essential for efficient processing of 16S rRNA. May be needed both before and after RbfA during the maturation of 16S rRNA. It has affinity for free ribosomal 30S subunits but not for 70S ribosomes. In Rhodococcus jostii (strain RHA1), this protein is Ribosome maturation factor RimM.